The sequence spans 410 residues: uncharacterized protein (410 aa).

11–39 provides a ligand contact to NAD(+); the sequence is VLVIGGGPSGTALSAELAARGLDVQQLAP.

This sequence belongs to the lycopene cyclase family.

This is an uncharacterized protein from Deinococcus radiodurans (strain ATCC 13939 / DSM 20539 / JCM 16871 / CCUG 27074 / LMG 4051 / NBRC 15346 / NCIMB 9279 / VKM B-1422 / R1).